A 79-amino-acid chain; its full sequence is Exodeoxyribonuclease 7 small subunit (79 aa).

Belongs to the XseB family. As to quaternary structure, heterooligomer composed of large and small subunits.

It is found in the cytoplasm. It carries out the reaction Exonucleolytic cleavage in either 5'- to 3'- or 3'- to 5'-direction to yield nucleoside 5'-phosphates.. Functionally, bidirectionally degrades single-stranded DNA into large acid-insoluble oligonucleotides, which are then degraded further into small acid-soluble oligonucleotides. The chain is Exodeoxyribonuclease 7 small subunit from Dechloromonas aromatica (strain RCB).